A 309-amino-acid polypeptide reads, in one-letter code: Protoheme IX farnesyltransferase (309 aa).

9 helical membrane-spanning segments follow: residues 35–55, 64–84, 114–134, 135–155, 161–181, 187–207, 236–256, 257–277, and 289–309; these read IGIVNSNLITTFTGLWLALYF, LHIVFFTLFGSALVIAGSCSI, VLWLGIIFITVGTLSLLMTTV, TAAIVGLIGAITYIFLYTMWS, LNTVVGSISGAVPPVIGWTAV, VVPLVLFLIMFIWQTPHFLAL, IVVWVACLLPLPFYLFSLGVP, FLTVATLLNVGWLALGLYGFK, and FIYSLNYLTILFVAMVIATLW.

The protein belongs to the UbiA prenyltransferase family. Protoheme IX farnesyltransferase subfamily. In terms of assembly, interacts with CtaA.

It is found in the cell membrane. The enzyme catalyses heme b + (2E,6E)-farnesyl diphosphate + H2O = Fe(II)-heme o + diphosphate. The protein operates within porphyrin-containing compound metabolism; heme O biosynthesis; heme O from protoheme: step 1/1. Its function is as follows. Converts heme B (protoheme IX) to heme O by substitution of the vinyl group on carbon 2 of heme B porphyrin ring with a hydroxyethyl farnesyl side group. The sequence is that of Protoheme IX farnesyltransferase from Geobacillus sp. (strain WCH70).